Reading from the N-terminus, the 697-residue chain is Histone deacetylase HOS3 (697 aa).

Positions 40-440 are histone deacetylase; that stretch reads AKAVVVLSPY…LIGLQNQDWV (401 aa). The active site involves H196. The disordered stretch occupies residues 525–573; that stretch reads IRSHRSNASPEKELHENKPRSTEKQEQREIRSDTKVKQLSSNNRAAETQ. Over residues 534–560 the composition is skewed to basic and acidic residues; that stretch reads PEKELHENKPRSTEKQEQREIRSDTKV. Residues 561 to 573 show a composition bias toward polar residues; it reads KQLSSNNRAAETQ. Phosphoserine is present on residues S582, S583, S613, and S629. Residues 625-638 show a composition bias toward basic and acidic residues; that stretch reads GDEDSDHELKEKNW. The segment at 625–697 is disordered; that stretch reads GDEDSDHELK…KHTTRSGGRW (73 aa). The span at 665–674 shows a compositional bias: polar residues; that stretch reads QPQNANTPTY.

It belongs to the histone deacetylase family. HD type 1 subfamily. Homodimer.

Its subcellular location is the nucleus. The catalysed reaction is N(6)-acetyl-L-lysyl-[histone] + H2O = L-lysyl-[histone] + acetate. Its function is as follows. Responsible for the deacetylation of lysine residues on the N-terminal part of the core histones (H2A, H2B, H3 and H4). Histone deacetylation gives a tag for epigenetic repression and plays an important role in transcriptional regulation, cell cycle progression and developmental events. Histone deacetylases act via the formation of large multiprotein complexes. The protein is Histone deacetylase HOS3 (HOS3) of Saccharomyces cerevisiae (strain ATCC 204508 / S288c) (Baker's yeast).